Here is an 87-residue protein sequence, read N- to C-terminus: Large ribosomal subunit protein bL31B (87 aa).

Belongs to the bacterial ribosomal protein bL31 family. Type B subfamily. Part of the 50S ribosomal subunit.

This Burkholderia thailandensis (strain ATCC 700388 / DSM 13276 / CCUG 48851 / CIP 106301 / E264) protein is Large ribosomal subunit protein bL31B.